A 339-amino-acid chain; its full sequence is Adenylosuccinate synthetase (339 aa).

Residues 12–18 and 42–44 each bind GTP; these read GDEGKGS and GHS. Asp-13 (proton acceptor) is an active-site residue. Mg(2+) contacts are provided by Asp-13 and Gly-42. IMP-binding positions include 13–16, 40–43, Thr-127, Arg-141, Gln-179, Thr-194, and Arg-256; these read DEGK and NAGH. Catalysis depends on His-43, which acts as the Proton donor. Substrate is bound at residue 252–258; the sequence is TVTGRRR. Residues Arg-258, 284–286, and 324–326 each bind GTP; these read MLD and KTG.

It belongs to the adenylosuccinate synthetase family. Homodimer. The cofactor is Mg(2+).

Its subcellular location is the cytoplasm. The enzyme catalyses IMP + L-aspartate + GTP = N(6)-(1,2-dicarboxyethyl)-AMP + GDP + phosphate + 2 H(+). The protein operates within purine metabolism; AMP biosynthesis via de novo pathway; AMP from IMP: step 1/2. Plays an important role in the de novo pathway of purine nucleotide biosynthesis. Catalyzes the first committed step in the biosynthesis of AMP from IMP. This is Adenylosuccinate synthetase from Thermococcus onnurineus (strain NA1).